The primary structure comprises 304 residues: GTP cyclohydrolase FolE2 (304 aa).

The protein belongs to the GTP cyclohydrolase IV family.

It catalyses the reaction GTP + H2O = 7,8-dihydroneopterin 3'-triphosphate + formate + H(+). It functions in the pathway cofactor biosynthesis; 7,8-dihydroneopterin triphosphate biosynthesis; 7,8-dihydroneopterin triphosphate from GTP: step 1/1. Its function is as follows. Converts GTP to 7,8-dihydroneopterin triphosphate. This is GTP cyclohydrolase FolE2 from Hahella chejuensis (strain KCTC 2396).